We begin with the raw amino-acid sequence, 156 residues long: Movement protein P17 (156 aa).

The interval 38 to 54 (AEDAEEEAIAAQEELEF) is homodimerization. Disordered regions lie at residues 55–80 (PEDE…EVSP) and 106–156 (ASYF…IKRG). Residues 57–156 (DEAQARHSCL…RAAPKLIKRG (100 aa)) form an RNA-binding region. Phosphoserine is present on residues Ser71, Ser79, Ser137, and Ser140. Basic residues predominate over residues 144-156 (KLRRAAPKLIKRG).

This sequence belongs to the polerovirus movement protein family. Homodimer. In terms of processing, expressed as a nonphosphorylated 20kDa form and a phosphorylated 22kDa form. Phosphorylated by a host PKC-related kinase. Serine phosphorylation is required for plamodesma targeting.

Its subcellular location is the host cell junction. It is found in the host plasmodesma. The protein localises to the host chloroplast envelope. The protein resides in the host Golgi apparatus. It localises to the host mitochondrion outer membrane. Its function is as follows. Together with movement protein P3a, facilitates long-distance movement of virions in host. Transports viral genome to neighboring plant cells directly through plasmosdesmata, without any budding. The movement protein allows efficient cell to cell propagation, by bypassing the host cell wall barrier. Binds ssRNA. In Potato leafroll virus (strain Potato/Canada/Rowhani/1979) (PLrV), this protein is Movement protein P17.